A 417-amino-acid chain; its full sequence is uncharacterized protein (417 aa).

Helical transmembrane passes span 1–21 (MSVL…VLLS), 32–52 (VVGA…VPAG), 96–116 (VLPI…LGIM), 168–188 (LFAI…AGYA), 192–212 (VPLT…LLFA), 261–281 (IAFV…GGWF), 286–306 (LTLQ…IGVT), 351–371 (AIIT…ILIG), and 392–412 (VIAG…FIGL).

This sequence belongs to the concentrative nucleoside transporter (CNT) (TC 2.A.41) family.

It localises to the cell inner membrane. This is an uncharacterized protein from Haemophilus influenzae (strain ATCC 51907 / DSM 11121 / KW20 / Rd).